Reading from the N-terminus, the 826-residue chain is Periplasmic nitrate reductase (826 aa).

Residues 1–32 (MELNRRDFMKANAAIAAAAAAGITIPVKNVQA) constitute a signal peptide (tat-type signal). The region spanning 37–93 (IRWDKAPCRYCGTGCSVLVGTKDGRVVATQGDPDAEVNRGLNCIKGYFLSKIMYGAD) is the 4Fe-4S Mo/W bis-MGD-type domain. The [4Fe-4S] cluster site is built by C44, C47, C51, and C79. Mo-bis(molybdopterin guanine dinucleotide) contacts are provided by residues K81, Q148, N173, C177, 210–217 (WGSNMAEM), 241–245 (STYEH), 260–262 (QSD), M370, Q374, N480, 506–507 (SD), K529, D556, and 716–725 (TGRVLEHWHT). F792 is a binding site for substrate. Mo-bis(molybdopterin guanine dinucleotide) contacts are provided by N800 and K817.

It belongs to the prokaryotic molybdopterin-containing oxidoreductase family. NasA/NapA/NarB subfamily. Component of the periplasmic nitrate reductase NapAB complex composed of NapA and NapB. [4Fe-4S] cluster is required as a cofactor. Mo-bis(molybdopterin guanine dinucleotide) serves as cofactor. Post-translationally, predicted to be exported by the Tat system. The position of the signal peptide cleavage has not been experimentally proven.

It localises to the periplasm. The catalysed reaction is 2 Fe(II)-[cytochrome] + nitrate + 2 H(+) = 2 Fe(III)-[cytochrome] + nitrite + H2O. In terms of biological role, catalytic subunit of the periplasmic nitrate reductase complex NapAB. Receives electrons from NapB and catalyzes the reduction of nitrate to nitrite. This chain is Periplasmic nitrate reductase, found in Actinobacillus succinogenes (strain ATCC 55618 / DSM 22257 / CCUG 43843 / 130Z).